The chain runs to 327 residues: Biotin synthase (327 aa).

The 230-residue stretch at 44–273 folds into the Radical SAM core domain; sequence FMGNKFDTCS…NAFLRFSGGR (230 aa). [4Fe-4S] cluster contacts are provided by Cys62, Cys66, and Cys69. Residues Cys138, Cys198, and Arg268 each contribute to the [2Fe-2S] cluster site.

It belongs to the radical SAM superfamily. Biotin synthase family. Homodimer. The cofactor is [4Fe-4S] cluster. [2Fe-2S] cluster is required as a cofactor.

It catalyses the reaction (4R,5S)-dethiobiotin + (sulfur carrier)-SH + 2 reduced [2Fe-2S]-[ferredoxin] + 2 S-adenosyl-L-methionine = (sulfur carrier)-H + biotin + 2 5'-deoxyadenosine + 2 L-methionine + 2 oxidized [2Fe-2S]-[ferredoxin]. It participates in cofactor biosynthesis; biotin biosynthesis; biotin from 7,8-diaminononanoate: step 2/2. Catalyzes the conversion of dethiobiotin (DTB) to biotin by the insertion of a sulfur atom into dethiobiotin via a radical-based mechanism. This chain is Biotin synthase, found in Parabacteroides distasonis (strain ATCC 8503 / DSM 20701 / CIP 104284 / JCM 5825 / NCTC 11152).